Here is an 88-residue protein sequence, read N- to C-terminus: Antitoxin HipB (88 aa).

The 55-residue stretch at 17–71 folds into the HTH cro/C1-type domain; sequence MKLVRQQNGWTQSELAKKIGIKQATISNFENNPDNTTLTTFFKILQSLELSMTLC. A DNA-binding region (H-T-H motif) is located at residues 21-47; sequence RQQNGWTQSELAKKIGIKQATISNFEN.

In terms of assembly, homodimer. Binds operator DNA sites in the absence of HipA, inducing a 70 degree bend in consecutive operators and deforming DNA between the operators so that HipB dimers bind on opposite faces of the DNA. Forms a HipA(2)HipB(2) heterotetramer which can interact with a single operator site on DNA, inducing a 70 degree bend. When 2 operators are present each HipB dimer contacts 1 HipA molecule, which are brought together by the DNA bend and dimerize, blocking the HipA active site and inactivating its toxic activity. HipA-HipB-induced bending also distorts the -35 and -10 boxes of the promoter and probably prevents sigma-factor binding, and additionally bound HipB and HipA block RNA polymerase access to the -35 box, thus repressing the operon. This complex also blocks the toxic activity of HipA. Mutations present in allele hipA7 (G22S and D291A) decrease the affinity of HipA for HipB. Degraded by Lon protease in vivo; half-life is 17 minutes in wild-type cells and over 200 minutes in a lon deletion strain. In vitro degradation by Lon is Mg(2+)-ATP-dependent.

Degraded by Lon protease; degradation is inhibited in a HipA-HipB complex and when bound to the operator consensus sequence dsDNA. Functionally, antitoxin component of a type II toxin-antitoxin (TA) system. Neutralizes the toxic effect of cognate toxin HipA. Also neutralizes the toxic effect of non-cognate toxin YjjJ. Binds to operator sites with the consensus sequence 5-'TATCCN(8)GGATA-3' to repress the hipBA operon promoter; binding of HipB(2) to DNA induces a 70 degree bend. This forces HipA dimerization, which blocks HipA's active site and thus its toxic action. May play a role in biofilm formation. In Escherichia coli (strain K12), this protein is Antitoxin HipB (hipB).